The primary structure comprises 362 residues: UDP-N-acetylglucosamine--N-acetylmuramyl-(pentapeptide) pyrophosphoryl-undecaprenol N-acetylglucosamine transferase (362 aa).

UDP-N-acetyl-alpha-D-glucosamine contacts are provided by arginine 166, serine 196, and glutamine 290.

The protein belongs to the glycosyltransferase 28 family. MurG subfamily.

It localises to the cell membrane. The enzyme catalyses Mur2Ac(oyl-L-Ala-gamma-D-Glu-L-Lys-D-Ala-D-Ala)-di-trans,octa-cis-undecaprenyl diphosphate + UDP-N-acetyl-alpha-D-glucosamine = beta-D-GlcNAc-(1-&gt;4)-Mur2Ac(oyl-L-Ala-gamma-D-Glu-L-Lys-D-Ala-D-Ala)-di-trans,octa-cis-undecaprenyl diphosphate + UDP + H(+). It functions in the pathway cell wall biogenesis; peptidoglycan biosynthesis. In terms of biological role, cell wall formation. Catalyzes the transfer of a GlcNAc subunit on undecaprenyl-pyrophosphoryl-MurNAc-pentapeptide (lipid intermediate I) to form undecaprenyl-pyrophosphoryl-MurNAc-(pentapeptide)GlcNAc (lipid intermediate II). In Staphylococcus carnosus (strain TM300), this protein is UDP-N-acetylglucosamine--N-acetylmuramyl-(pentapeptide) pyrophosphoryl-undecaprenol N-acetylglucosamine transferase.